We begin with the raw amino-acid sequence, 449 residues long: uncharacterized protein (449 aa).

13 helical membrane-spanning segments follow: residues 1–21 (MVAN…ILLI), 26–46 (IHLT…HVIT), 51–71 (IDYI…MVLV), 97–117 (LLML…PNAT), 137–157 (FVPI…LTLV), 178–198 (FKLS…TPFL), 223–243 (VLMA…IGES), 244–264 (LPVP…ALLL), 285–305 (LIFF…GVTA), 310–330 (LLAV…VFTV), 340–360 (IPLV…IGFA), 377–397 (VLPL…GTLV), and 425–445 (GLPV…WLMF).

Belongs to the CitM (TC 2.A.11) transporter family.

Its subcellular location is the cell membrane. This is an uncharacterized protein from Synechocystis sp. (strain ATCC 27184 / PCC 6803 / Kazusa).